The primary structure comprises 289 residues: Enoyl-CoA delta isomerase 1, mitochondrial (289 aa).

Residues 1-28 constitute a mitochondrion transit peptide; sequence MALAAARRLLLHAGSRLGRREAVDGARR. Residue K48 is modified to N6-acetyllysine; alternate. K48 carries the post-translational modification N6-succinyllysine; alternate. Residue K71 is modified to N6-succinyllysine. The residue at position 76 (K76) is an N6-acetyllysine. Residues 93 to 97, G140, and N164 each bind substrate; that span reads AGLDL. Residues K222, K229, K255, and K270 each carry the N6-acetyllysine; alternate modification. 4 positions are modified to N6-succinyllysine; alternate: K222, K229, K255, and K270. K275 is subject to N6-succinyllysine. K283 is subject to N6-acetyllysine; alternate. N6-succinyllysine; alternate is present on K283.

The protein belongs to the enoyl-CoA hydratase/isomerase family. As to quaternary structure, homotrimer.

It is found in the mitochondrion matrix. It carries out the reaction a (3Z)-enoyl-CoA = a 4-saturated (2E)-enoyl-CoA. The catalysed reaction is a (3E)-enoyl-CoA = a 4-saturated (2E)-enoyl-CoA. The enzyme catalyses (3Z)-octenoyl-CoA = (2E)-octenoyl-CoA. It catalyses the reaction (2E)-tetradecenoyl-CoA = (3Z)-tetradecenoyl-CoA. It carries out the reaction (3Z)-dodecenoyl-CoA = (2E)-dodecenoyl-CoA. The catalysed reaction is (3Z)-hexenoyl-CoA = (2E)-hexenoyl-CoA. The enzyme catalyses (3Z)-decenoyl-CoA = (2E)-decenoyl-CoA. Its pathway is lipid metabolism; fatty acid beta-oxidation. Key enzyme of fatty acid beta-oxidation. Able to isomerize both 3-cis (3Z) and 3-trans (3E) double bonds into the 2-trans (2E) form in a range of enoyl-CoA species, with a preference for (3Z)-enoyl-CoAs over (3E)-enoyl-CoAs. The catalytic efficiency of this enzyme is not affected by the fatty acyl chain length. This chain is Enoyl-CoA delta isomerase 1, mitochondrial, found in Mus musculus (Mouse).